We begin with the raw amino-acid sequence, 176 residues long: Cytochrome b (176 aa).

Transmembrane regions (helical) follow at residues 33 to 53, 77 to 98, and 113 to 133; these read FGSLLGICLGLQILTGLFLAM, WVLRYLHANGASMFFICLYLHV, and WNMGVVLLFAVMATAFMGYVL. Residues histidine 83 and histidine 97 each coordinate heme b.

It belongs to the cytochrome b family. In terms of assembly, the cytochrome bc1 complex contains 11 subunits: 3 respiratory subunits (MT-CYB, CYC1 and UQCRFS1), 2 core proteins (UQCRC1 and UQCRC2) and 6 low-molecular weight proteins (UQCRH/QCR6, UQCRB/QCR7, UQCRQ/QCR8, UQCR10/QCR9, UQCR11/QCR10 and a cleavage product of UQCRFS1). This cytochrome bc1 complex then forms a dimer. The cofactor is heme b.

The protein localises to the mitochondrion inner membrane. Its function is as follows. Component of the ubiquinol-cytochrome c reductase complex (complex III or cytochrome b-c1 complex) that is part of the mitochondrial respiratory chain. The b-c1 complex mediates electron transfer from ubiquinol to cytochrome c. Contributes to the generation of a proton gradient across the mitochondrial membrane that is then used for ATP synthesis. The chain is Cytochrome b (MT-CYB) from Nycticeius humeralis (Evening bat).